The sequence spans 399 residues: Enoyl-[acyl-carrier-protein] reductase [NADH] (399 aa).

NAD(+)-binding positions include 48 to 53 (GASTGY), 74 to 75 (FE), 111 to 112 (DA), and 139 to 140 (LA). Residue tyrosine 225 coordinates substrate. Tyrosine 235 (proton donor) is an active-site residue. NAD(+) contacts are provided by residues lysine 244 and 274–276 (VVT).

This sequence belongs to the TER reductase family. As to quaternary structure, monomer.

The enzyme catalyses a 2,3-saturated acyl-[ACP] + NAD(+) = a (2E)-enoyl-[ACP] + NADH + H(+). The protein operates within lipid metabolism; fatty acid biosynthesis. In terms of biological role, involved in the final reduction of the elongation cycle of fatty acid synthesis (FAS II). Catalyzes the reduction of a carbon-carbon double bond in an enoyl moiety that is covalently linked to an acyl carrier protein (ACP). The sequence is that of Enoyl-[acyl-carrier-protein] reductase [NADH] from Yersinia enterocolitica serotype O:8 / biotype 1B (strain NCTC 13174 / 8081).